We begin with the raw amino-acid sequence, 444 residues long: Deoxyguanosinetriphosphate triphosphohydrolase-like protein (444 aa).

A disordered region spans residues 1-28 (MTDAVWNERRLGEDKQRRNDHRSPYQRD). An HD domain is found at 59-250 (RLTHSLEVSQ…MELADDIAYA (192 aa)).

Belongs to the dGTPase family. Type 2 subfamily.

The sequence is that of Deoxyguanosinetriphosphate triphosphohydrolase-like protein from Shewanella pealeana (strain ATCC 700345 / ANG-SQ1).